Reading from the N-terminus, the 224-residue chain is UPF0173 metal-dependent hydrolase Ta0764 (224 aa).

The protein belongs to the UPF0173 family.

The sequence is that of UPF0173 metal-dependent hydrolase Ta0764 from Thermoplasma acidophilum (strain ATCC 25905 / DSM 1728 / JCM 9062 / NBRC 15155 / AMRC-C165).